Reading from the N-terminus, the 916-residue chain is Isoleucine--tRNA ligase (916 aa).

The 'HIGH' region motif lies at P58–H68. An L-isoleucyl-5'-AMP-binding site is contributed by E568. The short motif at K609 to S613 is the 'KMSKS' region element. ATP is bound at residue K612. The Zn(2+) site is built by C891, C894, C906, and C909.

The protein belongs to the class-I aminoacyl-tRNA synthetase family. IleS type 1 subfamily. In terms of assembly, monomer. The cofactor is Zn(2+).

The protein resides in the cytoplasm. It carries out the reaction tRNA(Ile) + L-isoleucine + ATP = L-isoleucyl-tRNA(Ile) + AMP + diphosphate. Catalyzes the attachment of isoleucine to tRNA(Ile). As IleRS can inadvertently accommodate and process structurally similar amino acids such as valine, to avoid such errors it has two additional distinct tRNA(Ile)-dependent editing activities. One activity is designated as 'pretransfer' editing and involves the hydrolysis of activated Val-AMP. The other activity is designated 'posttransfer' editing and involves deacylation of mischarged Val-tRNA(Ile). This Campylobacter fetus subsp. fetus (strain 82-40) protein is Isoleucine--tRNA ligase.